We begin with the raw amino-acid sequence, 77 residues long: Large ribosomal subunit protein bL28 (77 aa).

Residues methionine 1–histidine 20 form a disordered region.

Belongs to the bacterial ribosomal protein bL28 family.

The polypeptide is Large ribosomal subunit protein bL28 (Pseudomonas syringae pv. tomato (strain ATCC BAA-871 / DC3000)).